The primary structure comprises 106 residues: Toxin-like structure LSTX-D5 (106 aa).

A signal peptide spans 1-20 (MMKVLVVVALLVTLISYSSS). A propeptide spanning residues 21 to 41 (EGIDDLETDELLSLMANEQTR) is cleaved from the precursor. 4 cysteine pairs are disulfide-bonded: cysteine 45–cysteine 60, cysteine 52–cysteine 69, cysteine 59–cysteine 85, and cysteine 71–cysteine 83.

It belongs to the neurotoxin 19 (CSTX) family. 02 (D7) subfamily. In terms of tissue distribution, expressed by the venom gland.

The protein localises to the secreted. The polypeptide is Toxin-like structure LSTX-D5 (Lycosa singoriensis (Wolf spider)).